Here is a 350-residue protein sequence, read N- to C-terminus: Anthranilate phosphoribosyltransferase (350 aa).

5-phospho-alpha-D-ribose 1-diphosphate-binding positions include glycine 93, 96–97, threonine 101, 103–106, 121–129, and serine 133; these read GD, NIST, and KHGNRSASG. Glycine 93 is a binding site for anthranilate. Serine 105 is a Mg(2+) binding site. Asparagine 124 contacts anthranilate. Arginine 179 lines the anthranilate pocket. 2 residues coordinate Mg(2+): aspartate 238 and glutamate 239.

Belongs to the anthranilate phosphoribosyltransferase family. Homodimer. Requires Mg(2+) as cofactor.

It carries out the reaction N-(5-phospho-beta-D-ribosyl)anthranilate + diphosphate = 5-phospho-alpha-D-ribose 1-diphosphate + anthranilate. The protein operates within amino-acid biosynthesis; L-tryptophan biosynthesis; L-tryptophan from chorismate: step 2/5. Catalyzes the transfer of the phosphoribosyl group of 5-phosphorylribose-1-pyrophosphate (PRPP) to anthranilate to yield N-(5'-phosphoribosyl)-anthranilate (PRA). This chain is Anthranilate phosphoribosyltransferase, found in Parasynechococcus marenigrum (strain WH8102).